A 310-amino-acid chain; its full sequence is Tagatose-6-phosphate kinase (310 aa).

Belongs to the carbohydrate kinase PfkB family. LacC subfamily.

The enzyme catalyses D-tagatofuranose 6-phosphate + ATP = D-tagatofuranose 1,6-bisphosphate + ADP + H(+). It functions in the pathway carbohydrate metabolism; D-tagatose 6-phosphate degradation; D-glyceraldehyde 3-phosphate and glycerone phosphate from D-tagatose 6-phosphate: step 1/2. The protein is Tagatose-6-phosphate kinase of Staphylococcus aureus (strain USA300 / TCH1516).